We begin with the raw amino-acid sequence, 1096 residues long: Inactive phospholipase C-like protein 1 (1096 aa).

The disordered stretch occupies residues 1–101 (MAEGAASREA…KKTVSFSSMP (101 aa)). Residue Ser48 is modified to Phosphoserine. The span at 49–60 (GVALPGAAGVPA) shows a compositional bias: low complexity. Residue Ser78 is modified to Phosphoserine. An interaction with PPP1C region spans residues 83–222 (PSNQKCGGRK…NIWVSGLRYL (140 aa)). Position 94 is a phosphothreonine (Thr94). At Thr94 the chain carries Phosphothreonine; by PKA. A Phosphoserine; by PKA modification is found at Ser96. The 111-residue stretch at 114 to 224 (SFMQAGCELK…WVSGLRYLVS (111 aa)) folds into the PH domain. The PI-PLC X-box domain maps to 399–543 (QDMTQPLSHY…LKNMIIVKGK (145 aa)). Residues 544–568 (KLPSESDLLEGEVTDEDEEAEMSRR) are interaction with GABA A beta subunit. Over residues 550–563 (DLLEGEVTDEDEEA) the composition is skewed to acidic residues. The disordered stretch occupies residues 550-569 (DLLEGEVTDEDEEAEMSRRM). At Thr557 the chain carries Phosphothreonine. Position 570 is a phosphoserine (Ser570). In terms of domain architecture, PI-PLC Y-box spans 586 to 702 (LSDLVSICKS…GYVLRPSIMR (117 aa)). A C2 domain is found at 702–831 (RDEVSYFSAN…PGYRHVPLRS (130 aa)). The stretch at 1040–1060 (DLLKNAKNEAVENIKQIQLAC) forms a coiled coil. A disordered region spans residues 1067 to 1096 (KGPGGGSEAKGKRSLEAIEEKESSEENGKL). Positions 1075-1096 (AKGKRSLEAIEEKESSEENGKL) are enriched in basic and acidic residues. Ser1080 carries the phosphoserine modification.

As to quaternary structure, interacts with PPP2CA, Ins(1,4,5)P3, Ins(1,4,5,6)P4 GABARAP, GABA receptor beta subunits, GABA receptor gamma-2 subunits and PPP1C. May form a ternary complex with GABA receptor beta subunit and GABARAP. The formation of a ternary complex with GABA receptor beta subunit and GABARAP could be the key step for facilitating the association of GABARAP with the GABA receptor gamma-2 subunit and to allow it to be transported at the right destination. Post-translationally, phosphorylated by the catalytic subunit of PKA. Phosphorylation of Thr-94 resulted in dissociation of PPP1C from PRIP1.

The protein resides in the cytoplasm. Involved in an inositol phospholipid-based intracellular signaling cascade. Shows no PLC activity to phosphatidylinositol 4,5-bisphosphate and phosphatidylinositol. Component in the phospho-dependent endocytosis process of GABA A receptor. Acts as an inhibitor of PPP1C. Involved in the assembly and/or the trafficking of gamma-2 subunit-containing GABA A receptors. The polypeptide is Inactive phospholipase C-like protein 1 (Plcl1) (Mus musculus (Mouse)).